Here is a 1244-residue protein sequence, read N- to C-terminus: Structural polyprotein (1244 aa).

The tract at residues 1–113 is disordered; the sequence is MNSVFYNPFG…GKRQRTALKF (113 aa). Polar residues predominate over residues 35–44; it reads GLTTQIQQLT. The host transcription inhibition stretch occupies residues 35 to 69; it reads GLTTQIQQLTRAVRALVLDNATRRQRPAPRTRPRK. Over residues 57 to 81 the composition is skewed to basic residues; that stretch reads RRQRPAPRTRPRKPKTQKPKPKKQN. Residues 62-103 carry the Nuclear localization signal motif; that stretch reads APRTRPRKPKTQKPKPKKQNQKPPQQQKKGKNQPQQPKKPKP. Positions 82–97 are enriched in low complexity; sequence QKPPQQQKKGKNQPQQ. The tract at residues 85–118 is binding to the viral RNA; the sequence is PQQQKKGKNQPQQPKKPKPGKRQRTALKFEADRT. Residues 99-109 are compositionally biased toward basic residues; sequence KKPKPGKRQRT. The tract at residues 103–117 is ribosome-binding; that stretch reads PGKRQRTALKFEADR. The Peptidase S3 domain maps to 117–267; sequence RTFVGKNEDG…KTTHEDTVEW (151 aa). His-144 functions as the Charge relay system in the catalytic mechanism. The Nuclear export signal signature appears at 149 to 159; sequence IDHPALAKLKF. The segment at 160–165 is interaction with spike glycoprotein E2; it reads TKSSSY. Residue Asp-166 is the Charge relay system of the active site. Positions 188–198 are dimerization of the capsid protein; that stretch reads PEVFYNWHHGA. Ser-218 acts as the Charge relay system in catalysis. A dimerization of the capsid protein region spans residues 224–228; the sequence is DNSGK. The interval 252–256 is interaction with spike glycoprotein E2; that stretch reads KKGAA. Residues 268 to 280 are functions as an uncleaved signal peptide for the precursor of protein E3/E2; that stretch reads SRAITAMCILQNV. The Extracellular portion of the chain corresponds to 268–696; the sequence is SRAITAMCIL…HYYHLYPFYT (429 aa). Asn-279 carries an N-linked (GlcNAc...) asparagine; by host glycan. Cystine bridges form between Cys-284-Cys-290, Cys-481-Cys-595, Cys-530-Cys-555, and Cys-532-Cys-549. A glycan (N-linked (GlcNAc...) asparagine; by host) is linked at Asn-525. Asn-647 carries N-linked (GlcNAc...) asparagine; by host glycosylation. A helical membrane pass occupies residues 697 to 717; sequence VTVLSGMGLAICAGLVISILC. Topologically, residues 718-751 are cytoplasmic; that stretch reads CCKARRDCLTPYQLAPNATVPFLVTLCCCFQRTS. Residues 720–724 are interaction with the capsid protein; sequence KARRD. Residues Cys-725, Cys-745, and Cys-746 are each lipidated (S-palmitoyl cysteine; by host). A disulfide bridge connects residues Cys-725 and Cys-746. The Extracellular portion of the chain corresponds to 752–764; it reads ADEFTDTMGYLWQ. 2 helical membrane passes run 765 to 785 and 786 to 805; these read HSQTMFWIQLVIPLAAVITLV and RCCSCCLPFLLVASPPNKAD. Over 806-1218 the chain is Extracellular; it reads AYEHTITVPN…KTSWNWITAL (413 aa). 4 disulfides stabilise this stretch: Cys-855/Cys-920, Cys-868/Cys-900, Cys-869/Cys-902, and Cys-874/Cys-884. The E1 fusion peptide loop stretch occupies residues 890 to 907; sequence VYPFLWGGAQCFCDSENS. Residues Asn-945 and Asn-1051 are each glycosylated (N-linked (GlcNAc...) asparagine; by host). Intrachain disulfides connect Cys-1065-Cys-1077, Cys-1106-Cys-1181, Cys-1111-Cys-1185, and Cys-1133-Cys-1175. Residues 1219–1239 traverse the membrane as a helical segment; that stretch reads MGGISSIAAIAAIVLVIALVF. Topologically, residues 1240–1244 are cytoplasmic; the sequence is TAQHR.

In terms of assembly, homodimer. Homomultimer. Interacts with host karyopherin KPNA4; this interaction allows the nuclear import of the viral capsid protein. Interacts with spike glycoprotein E2. Interacts with host IRAK1; the interaction leads to inhibition of IRAK1-dependent signaling. The precursor of protein E3/E2 and E1 form a heterodimer shortly after synthesis. As to quaternary structure, the precursor of protein E3/E2 and E1 form a heterodimer shortly after synthesis. Processing of the precursor of protein E3/E2 into E2 and E3 results in a heterodimer of the spike glycoproteins E2 and E1. Spike at virion surface are constituted of a trimer of E2-E1 heterodimers. After target cell attachment and endocytosis, E1 change conformation to form homotrimers. Interacts with 6K protein. In terms of assembly, interacts with spike glycoprotein E1. Processing of the precursor of protein E3/E2 into E2 and E3 results in a heterodimer of the spike glycoproteins E2 and E1. Spike at virion surface are constituted of a trimer of E2-E1 heterodimers. Interacts with 6K protein. Oligomer. Interacts with spike glycoprotein E1. Interacts with spike glycoprotein E2. Post-translationally, structural polyprotein: Specific enzymatic cleavages in vivo yield mature proteins. Capsid protein is auto-cleaved during polyprotein translation, unmasking a signal peptide at the N-terminus of the precursor of E3/E2. The remaining polyprotein is then targeted to the host endoplasmic reticulum, where host signal peptidase cleaves it into pE2, 6K and E1 proteins. pE2 is further processed to mature E3 and E2 by host furin in trans-Golgi vesicle. In terms of processing, palmitoylated via thioester bonds. These palmitoylations may induce disruption of the C-terminus transmembrane. This would result in the reorientation of E2 C-terminus from lumenal to cytoplasmic side. N-glycosylated. Post-translationally, palmitoylated via thioester bonds.

The protein resides in the virion. Its subcellular location is the host cytoplasm. It is found in the host cell membrane. The protein localises to the host nucleus. It localises to the virion membrane. The protein resides in the host Golgi apparatus. Its subcellular location is the host trans-Golgi network. It is found in the host endoplasmic reticulum. It carries out the reaction Autocatalytic release of the core protein from the N-terminus of the togavirus structural polyprotein by hydrolysis of a -Trp-|-Ser- bond.. In terms of biological role, forms an icosahedral capsid with a T=4 symmetry composed of 240 copies of the capsid protein surrounded by a lipid membrane through which penetrate 80 spikes composed of trimers of E1-E2 heterodimers. The capsid protein binds to the viral RNA genome at a site adjacent to a ribosome binding site for viral genome translation following genome release. Possesses a protease activity that results in its autocatalytic cleavage from the nascent structural protein. Following its self-cleavage, the capsid protein transiently associates with ribosomes, and within several minutes the protein binds to viral RNA and rapidly assembles into icosahedric core particles. The resulting nucleocapsid eventually associates with the cytoplasmic domain of the spike glycoprotein E2 at the cell membrane, leading to budding and formation of mature virions. In case of infection, new virions attach to target cells and after clathrin-mediated endocytosis their membrane fuses with the host endosomal membrane. This leads to the release of the nucleocapsid into the cytoplasm, followed by an uncoating event necessary for the genomic RNA to become accessible. The uncoating might be triggered by the interaction of capsid proteins with ribosomes. Binding of ribosomes would release the genomic RNA since the same region is genomic RNA-binding and ribosome-binding. Specifically inhibits interleukin-1 receptor-associated kinase 1/IRAK1-dependent signaling during viral entry, representing a means by which the alphaviruses may evade innate immune detection and activation prior to viral gene expression. Provides the signal sequence for the translocation of the precursor of protein E3/E2 to the host endoplasmic reticulum. Furin-cleaved E3 remains associated with spike glycoprotein E1 and mediates pH protection of the latter during the transport via the secretory pathway. After virion release from the host cell, the assembly protein E3 is gradually released in the extracellular space. Functionally, plays a role in viral attachment to target host cell, by binding to the cell receptor. Synthesized as a p62 precursor which is processed by furin at the cell membrane just before virion budding, giving rise to E2-E1 heterodimer. The p62-E1 heterodimer is stable, whereas E2-E1 is unstable and dissociate at low pH. p62 is processed at the last step, presumably to avoid E1 fusion activation before its final export to cell surface. E2 C-terminus contains a transitory transmembrane that would be disrupted by palmitoylation, resulting in reorientation of the C-terminal tail from lumenal to cytoplasmic side. This step is critical since E2 C-terminus is involved in budding by interacting with capsid proteins. This release of E2 C-terminus in cytoplasm occurs lately in protein export, and precludes premature assembly of particles at the endoplasmic reticulum membrane. Its function is as follows. Acts as a viroporin that participates in virus glycoprotein processing and transport to the plasma membrane, cell permeabilization and budding of viral particles. Disrupts the calcium homeostasis of the cell, probably at the endoplasmic reticulum level. This leads to cytoplasmic calcium elevation. Because of its lipophilic properties, the 6K protein is postulated to influence the selection of lipids that interact with the transmembrane domains of the glycoproteins, which, in turn, affects the deformability of the bilayer required for the extreme curvature that occurs as budding proceeds. Present in low amount in virions, about 3% compared to viral glycoproteins. In terms of biological role, class II viral fusion protein. Fusion activity is inactive as long as E1 is bound to E2 in mature virion. After virus attachment to target cell and endocytosis, acidification of the endosome induce dissociation of E1/E2 heterodimer and concomitant trimerization of the E1 subunits. This E1 trimer is fusion active, and promotes release of viral nucleocapsid in cytoplasm after endosome and viral membrane fusion. Efficient fusion requires the presence of cholesterol and sphingolipid in the target membrane. The sequence is that of Structural polyprotein from Aedes (AURAV).